Reading from the N-terminus, the 201-residue chain is Recombination protein RecR (201 aa).

The C4-type zinc finger occupies 60–75; the sequence is CSTCGNVDTADPCMIC. Residues 83–178 enclose the Toprim domain; that stretch reads GTIIVVEDVS…KVTRLAHGVP (96 aa).

The protein belongs to the RecR family.

In terms of biological role, may play a role in DNA repair. It seems to be involved in an RecBC-independent recombinational process of DNA repair. It may act with RecF and RecO. The chain is Recombination protein RecR from Mesorhizobium japonicum (strain LMG 29417 / CECT 9101 / MAFF 303099) (Mesorhizobium loti (strain MAFF 303099)).